Consider the following 334-residue polypeptide: ADP-L-glycero-D-manno-heptose-6-epimerase (334 aa).

Residues 11-12 (FI), 32-33 (DN), Lys39, Lys54, 77-81 (QGACS), and Asn94 each bind NADP(+). Tyr141 (proton acceptor) is an active-site residue. Residue Lys145 participates in NADP(+) binding. Asn171 lines the substrate pocket. 2 residues coordinate NADP(+): Val172 and Lys180. Lys180 acts as the Proton acceptor in catalysis. Substrate is bound by residues Arg182, His189, 203-206 (FGSN), Arg216, and Tyr295.

The protein belongs to the NAD(P)-dependent epimerase/dehydratase family. HldD subfamily. In terms of assembly, homopentamer. Requires NADP(+) as cofactor.

The catalysed reaction is ADP-D-glycero-beta-D-manno-heptose = ADP-L-glycero-beta-D-manno-heptose. It functions in the pathway nucleotide-sugar biosynthesis; ADP-L-glycero-beta-D-manno-heptose biosynthesis; ADP-L-glycero-beta-D-manno-heptose from D-glycero-beta-D-manno-heptose 7-phosphate: step 4/4. Functionally, catalyzes the interconversion between ADP-D-glycero-beta-D-manno-heptose and ADP-L-glycero-beta-D-manno-heptose via an epimerization at carbon 6 of the heptose. In Neisseria gonorrhoeae (strain ATCC 700825 / FA 1090), this protein is ADP-L-glycero-D-manno-heptose-6-epimerase.